Consider the following 441-residue polypeptide: ATP-dependent protease ATPase subunit HslU (441 aa).

ATP contacts are provided by residues Ile-17, 60–65, Asp-253, Glu-319, and Arg-391; that span reads GVGKTE.

This sequence belongs to the ClpX chaperone family. HslU subfamily. A double ring-shaped homohexamer of HslV is capped on each side by a ring-shaped HslU homohexamer. The assembly of the HslU/HslV complex is dependent on binding of ATP.

The protein localises to the cytoplasm. ATPase subunit of a proteasome-like degradation complex; this subunit has chaperone activity. The binding of ATP and its subsequent hydrolysis by HslU are essential for unfolding of protein substrates subsequently hydrolyzed by HslV. HslU recognizes the N-terminal part of its protein substrates and unfolds these before they are guided to HslV for hydrolysis. This is ATP-dependent protease ATPase subunit HslU from Legionella pneumophila (strain Paris).